The primary structure comprises 314 residues: L-lactate dehydrogenase 1 (314 aa).

Residues valine 16, aspartate 37, lysine 42, tyrosine 68, and glycine 82–leucine 83 contribute to the NAD(+) site. Residues glutamine 85, arginine 91, and asparagine 123–aspartate 126 each bind substrate. Residues alanine 121–asparagine 123 and serine 146 each bind NAD(+). Aspartate 151–arginine 154 lines the substrate pocket. 2 residues coordinate beta-D-fructose 1,6-bisphosphate: arginine 156 and histidine 171. Histidine 178 functions as the Proton acceptor in the catalytic mechanism. Tyrosine 223 carries the phosphotyrosine modification. Residue threonine 232 participates in substrate binding.

Belongs to the LDH/MDH superfamily. LDH family. As to quaternary structure, homotetramer.

Its subcellular location is the cytoplasm. It carries out the reaction (S)-lactate + NAD(+) = pyruvate + NADH + H(+). The protein operates within fermentation; pyruvate fermentation to lactate; (S)-lactate from pyruvate: step 1/1. With respect to regulation, allosterically activated by fructose 1,6-bisphosphate (FBP). Its function is as follows. Catalyzes the conversion of lactate to pyruvate. In Bacillus anthracis, this protein is L-lactate dehydrogenase 1.